The primary structure comprises 675 residues: MEGRPPPEGRPPPRPRTGRAPRGRRRAVFAAVLHWSHITHLFENDRHFSHLSTLEREMAFRTEMGLYYSYFKTIVEAPSFLNGVWMIMNDKLTEYPLVINTLKRFNLYPEVILASWYRIYTKIMDLIGIQTKICWTVTRGEGLSPIESCEGLGDPACFYVAVIFILNGLMMALFFIYGTYLSGSRLGGLVTVLCFFFNHGECTRVMWTPPLRESFSYPFLVLQMLLVTHILRATKLYRGSLIALCISNVFFMLPWQFAQFVLLTQIASLFAVYVVGYIDICKLRKIIYIHMISLALCFVLMFGNSMLLTSYYASSLVIIWGILAMKPHFLKINVSELSLWVIQGCFWLFGTVILKYLTSKIFGIADDAHIGNLLTSKFFSYKDFDTLLYTCAAEFDFMEKETPLRYTKTLLLPVVLVVFVAIVRKIISDMWGVLAKQQTHVRKHQFDHGELVYHALQLLAYTALGILIMRLKLFLTPHMCVMASLICSRQLFGWLFCKVHPGAIVFAILAAMSIQGSANLQTQWNIVGEFSNLPQEELIEWIKYSTKPDAVFAGAMPTMASVKLSALRPIVNHPHYEDAGLRARTKIVYSMYSRKAAEEVKRELIKLKVNYYILEESWCVRRSKPGCSMPEIWDVEDPANAGKTPLCNLLVKDSKPHFTTVFQNSVYKVLEVVKE.

The tract at residues 1–22 is disordered; it reads MEGRPPPEGRPPPRPRTGRAPR. 11 consecutive transmembrane segments (helical) span residues 66–88, 156–176, 186–208, 236–254, 260–279, 286–303, 309–325, 334–354, 414–434, 449–469, and 491–511; these read LYYSYFKTIVEAPSFLNGVWMIM, ACFYVAVIFILNGLMMALFFI, LGGLVTVLCFFFNHGECTRVMWT, LYRGSLIALCISNVFFMLP, FVLLTQIASLFAVYVVGYID, IIYIHMISLALCFVLMFG, TSYYASSLVIIWGILAM, VSELSLWVIQGCFWLFGTVIL, VVLVVFVAIVRKIISDMWGVL, GELVYHALQLLAYTALGILIM, and LFGWLFCKVHPGAIVFAILAA.

Belongs to the dpy-19 family. As to expression, widely expressed.

The protein resides in the endoplasmic reticulum membrane. It carries out the reaction L-tryptophyl-[protein] + a di-trans,poly-cis-dolichyl beta-D-mannosyl phosphate = C-alpha-D-mannosyl-L-tryptophyl-[protein] + a di-trans,poly-cis-dolichyl phosphate + H(+). It participates in protein modification; protein glycosylation. Its function is as follows. C-mannosyltransferase that mediates the C-mannosylation tryptophan residues on target proteins. The reaction occurs on the luminal side of the endoplasmic reticulum and involves the transfer of a mannose unit from a dolichylphosphate mannose (Dol-P-Man) donor to an acceptor protein containing a WxxW consensus sequence. C-mannosylates the first two tryptophans in the WxxWxxWxxC motif in thrombospondin (TSP) type-1 of UNC5A. Regulates neurite extension during development. This is Protein C-mannosyl-transferase DPY19L1 (DPY19L1) from Homo sapiens (Human).